A 488-amino-acid polypeptide reads, in one-letter code: MDDTLAKLPRAFSGATVLVLGDVMLDRFVYGAVDRISPEAPVPVIAVERETTMLGGAGNVARNVAALGGRAVLVGVIGDDDAGRALTAMIDREPSLDSALIVDAKRRTTEKTRYISGSHQMLRADREDRGEADGVALLAAFNAHLREVDVVVLSDYAKGVLTPVVLRAAIAAANAAGKPVIVDPKSRDFSRYDGATLIKPNRREAAEATGVTGAGDEVAAEAADAILSTAPNLAAALITRGRAGMTLAVRGEAPVHLPATALEVFDVSGAGDTVAATLALALARGASPLDAARLANLAAGLVVAKLGTDVVTADELVGLAHGEHADPAVDKIADLDGALAIVAGWRARGLKVGFTNGCFDLLHPGHVSLLAQAKAACDRLIVGLNTDASVQRLKGPTRPVQKETGRATVLASLSAVDLVVLFDEQTPLNLIRAFRPDVLVKGADYTVETVVGSDVVLAYGGKVVLAQLKAGQSTTNLIGRMNAPAVGG.

A ribokinase region spans residues Met1 to Pro327. ATP is bound at residue Asn201–Glu204. Asp272 is an active-site residue. Residues Phe354–Gly488 are cytidylyltransferase.

The protein in the N-terminal section; belongs to the carbohydrate kinase PfkB family. It in the C-terminal section; belongs to the cytidylyltransferase family. As to quaternary structure, homodimer.

It catalyses the reaction D-glycero-beta-D-manno-heptose 7-phosphate + ATP = D-glycero-beta-D-manno-heptose 1,7-bisphosphate + ADP + H(+). The catalysed reaction is D-glycero-beta-D-manno-heptose 1-phosphate + ATP + H(+) = ADP-D-glycero-beta-D-manno-heptose + diphosphate. It participates in nucleotide-sugar biosynthesis; ADP-L-glycero-beta-D-manno-heptose biosynthesis; ADP-L-glycero-beta-D-manno-heptose from D-glycero-beta-D-manno-heptose 7-phosphate: step 1/4. The protein operates within nucleotide-sugar biosynthesis; ADP-L-glycero-beta-D-manno-heptose biosynthesis; ADP-L-glycero-beta-D-manno-heptose from D-glycero-beta-D-manno-heptose 7-phosphate: step 3/4. In terms of biological role, catalyzes the phosphorylation of D-glycero-D-manno-heptose 7-phosphate at the C-1 position to selectively form D-glycero-beta-D-manno-heptose-1,7-bisphosphate. Catalyzes the ADP transfer from ATP to D-glycero-beta-D-manno-heptose 1-phosphate, yielding ADP-D-glycero-beta-D-manno-heptose. This is Bifunctional protein HldE from Caulobacter sp. (strain K31).